Reading from the N-terminus, the 310-residue chain is MIYFFISSLFFLILITLMFSKNIFKNIKKIKLFSKNNFFFYFLLFVLFIFIFWLVVYTDQGIKVANQKIIYFLTSYFLEILLSIDNVFAWFFIFKSLKIPLIYQKKVLLYGLWGALILRSIFSFSGSFLFSKWHWILYLFGGFFILTSLKFIFFSNLECDNKEENIKKLWIYKFFRVTENINNENFFVKIEKKIFITPLFVSLILIELSDIVFSVDSIPAALSVNNDLFIIFSSNFFAVLGLRSMYLFTAYFLKNFPIMKYALSLILMFIGFKILIEKFFTFSIFLTLAVILIILITTFLINLIFNLKKC.

Helical transmembrane passes span 1 to 21 (MIYF…MFSK), 38 to 58 (FFFY…VVYT), 74 to 94 (TSYF…FFIF), 110 to 130 (YGLW…SFLF), 135 to 155 (WILY…IFFS), 194 to 214 (IFIT…IVFS), 228 to 248 (LFII…MYLF), 256 to 276 (FPIM…KILI), and 284 to 304 (IFLT…INLI).

Belongs to the TerC family.

It is found in the cell membrane. This is an uncharacterized protein from Buchnera aphidicola subsp. Schizaphis graminum (strain Sg).